The primary structure comprises 2099 residues: MATLPSAERRAFALKINRYSSAEIRKQFTLPPNLGQYHRQSISTSGFPSLQLPQFYDPVEPVDFEGLLMTHLNSLDVQLAQELGDFTDDDLDVVFTPKECRTLQPSLPEEGVELDPHVRDCVQTYIREWLIVNRKNQGSPEICGFKKTGSRKDFHKTLPKQTFESETLECSEPAAQAGPRHLNVLCDVSGKGPVTACDFDLRSLQPDKRLENLLQQVSAEDFEKQNEEARRTNRQAELFALYPSVDEEDAVEIRPVPECPKEHLGNRILVKLLTLKFEIEIEPLFASIALYDVKERKKISENFHCDLNSDQFKGFLRAHTPSVAASSQARSAVFSVTYPSSDIYLVVKIEKVLQQGEIGDCAEPYTVIKESDGGKSKEKIEKLKLQAESFCQRLGKYRMPFAWAPISLSSFFNVSTLEREVTDVDSVVGRSSVGERRTLAQSRRLSERALSLEENGVGSNFKTSTLSVSSFFKQEGDRLSDEDLFKFLADYKRSSSLQRRVKSIPGLLRLEISTAPEIINCCLTPEMLPVKPFPENRTRPHKEILEFPTREVYVPHTVYRNLLYVYPQRLNFVNKLASARNITIKIQFMCGEDASNAMPVIFGKSSGPEFLQEVYTAVTYHNKSPDFYEEVKIKLPAKLTVNHHLLFTFYHISCQQKQGASVETLLGYSWLPILLNERLQTGSYCLPVALEKLPPNYSMHSAEKVPLQNPPIKWAEGHKGVFNIEVQAVSSVHTQDNHLEKFFTLCHSLESQVTFPIRVLDQKISEMALEHELKLSIICLNSSRLEPLVLFLHLVLDKLFQLSVQPMVIAGQTANFSQFAFESVVAIANSLHNSKDLSKDQHGRNCLLASYVHYVFRLPEVQRDVPKSGAPTALLDPRSYHTYGRTSAAAVSSKLLQARVMSSSNPDLAGTHSAADEEVKNIMSSKIADRNCSRMSYYCSGSSDAPSSPAAPRPASKKHFHEELALQMVVSTGMVRETVFKYAWFFFELLVKSMAQHVHNMDKRDSFRRTRFSDRFMDDITTIVNVVTSEIAALLVKPQKENEQAEKMNISLAFFLYDLLSLMDRGFVFNLIRHYCSQLSAKLSNLPTLISMRLEFLRILCSHEHYLNLNLFFMNADTAPTSPCPSISSQNSSSCSSFQDQKIASMFDLTSEYRQQHFLTGLLFTELAAALDAEGEGISKVQRKAVSAIHSLLSSHDLDPRCVKPEVKVKIAALYLPLVGIILDALPQLCDFTVADTRRYRTSGSDEEQEGAGAINQNVALAIAGNNFNLKTSGIVLSSLPYKQYNMLNADTTRNLMICFLWIMKNADQSLIRKWIADLPSTQLNRILDLLFICVLCFEYKGKQSSDKVSTQVLQKSRDVKARLEEALLRGEGARGEMMRRRAPGNDRFPGLNENLRWKKEQTHWRQANEKLDKTKAELDQEALISGNLATEAHLIILDMQENIIQASSALDCKDSLLGGVLRVLVNSLNCDQSTTYLTHCFATLRALIAKFGDLLFEEEVEQCFDLCHQVLHHCSSSMDVTRSQACATLYLLMRFSFGATSNFARVKMQVTMSLASLVGRAPDFNEEHLRRSLRTILAYSEEDTAMQMTPFPTQVEELLCNLNSILYDTVKMREFQEDPEMLMDLMYRIAKSYQASPDLRLTWLQNMAEKHTKKKCYTEAAMCLVHAAALVAEYLSMLEDHSYLPVGSVSFQNISSNVLEESVVSEDTLSPDEDGVCAGQYFTESGLVGLLEQAAELFSTGGLYETVNEVYKLVIPILEAHREFRKLTLTHSKLQRAFDSIVNKDHKRMFGTYFRVGFFGSKFGDLDEQEFVYKEPAITKLPEISHRLEAFYGQCFGAEFVEVIKDSTPVDKTKLDPNKAYIQITFVEPYFDEYEMKDRVTYFEKNFNLRRFMYTTPFTLEGRPRGELHEQYRRNTVLTTMHAFPYIKTRISVIQKEEFVLTPIEVAIEDMKKKTLQLAVAINQEPPDAKMLQMVLQGSVGATVNQGPLEVAQVFLAEIPADPKLYRHHNKLRLCFKEFIMRCGEAVEKNKRLITADQREYQQELKKNYNKLKENLRPMIERKIPELYKPIFRVESQKRDSFHRSSFRKCETQLSQGS.

Phosphoserine is present on residues Ser20, Ser139, and Ser451. A C2 DOCK-type domain is found at 560-729 (RNLLYVYPQR…GVFNIEVQAV (170 aa)). Ser904, Ser936, Ser1145, and Ser1243 each carry phosphoserine. Residues 1632 to 2066 (KSYQASPDLR…LRPMIERKIP (435 aa)) enclose the DOCKER domain. At Ser2087 the chain carries Phosphoserine.

The protein belongs to the DOCK family. In terms of assembly, interacts (via DOCKER domain) with GTPase CDC42; the interaction activates CDC42 by exchanging GDP for GTP. The unphosphorylated form interacts (via DOCKER domain) with LRCH1 (via LRR repeats); the interaction prevents the association between DOCK8 and CDC42. Interacts with CCDC88B. In terms of processing, in response to chemokine CXCL12/SDF-1-alpha stimulation, phosphorylated by PRKCA/PKC-alpha which promotes DOCK8 dissociation from LRCH1. Expressed in peripheral blood mononuclear cells (PBMCs).

The protein localises to the cytoplasm. The protein resides in the cell membrane. Its subcellular location is the cell projection. It is found in the lamellipodium membrane. Functionally, guanine nucleotide exchange factor (GEF) which specifically activates small GTPase CDC42 by exchanging bound GDP for free GTP. During immune responses, required for interstitial dendritic cell (DC) migration by locally activating CDC42 at the leading edge membrane of DC. Required for CD4(+) T-cell migration in response to chemokine stimulation by promoting CDC42 activation at T cell leading edge membrane. Is involved in NK cell cytotoxicity by controlling polarization of microtubule-organizing center (MTOC), and possibly regulating CCDC88B-mediated lytic granule transport to MTOC during cell killing. The chain is Dedicator of cytokinesis protein 8 (DOCK8) from Homo sapiens (Human).